Here is a 564-residue protein sequence, read N- to C-terminus: Probable metalloprotease ARX1 (564 aa).

Belongs to the peptidase M24 family. In terms of assembly, component of the nucleoplasmic and cytoplasmic pre-60S ribosomal particles.

It is found in the cytoplasm. It localises to the nucleus. In terms of biological role, probable metalloprotease involved in proper assembly of pre-ribosomal particles during the biogenesis of the 60S ribosomal subunit. Accompanies the pre-60S particles to the cytoplasm. The polypeptide is Probable metalloprotease ARX1 (ARX1) (Debaryomyces hansenii (strain ATCC 36239 / CBS 767 / BCRC 21394 / JCM 1990 / NBRC 0083 / IGC 2968) (Yeast)).